Consider the following 77-residue polypeptide: Translation initiation factor IF-1, chloroplastic (77 aa).

An S1-like domain is found at 1-71 (MKEQKWIHEG…TRGRIIYRLR (71 aa)).

It belongs to the IF-1 family. As to quaternary structure, component of the 30S ribosomal translation pre-initiation complex which assembles on the 30S ribosome in the order IF-2 and IF-3, IF-1 and N-formylmethionyl-tRNA(fMet); mRNA recruitment can occur at any time during PIC assembly.

It localises to the plastid. The protein resides in the chloroplast. Functionally, one of the essential components for the initiation of protein synthesis. Stabilizes the binding of IF-2 and IF-3 on the 30S subunit to which N-formylmethionyl-tRNA(fMet) subsequently binds. Helps modulate mRNA selection, yielding the 30S pre-initiation complex (PIC). Upon addition of the 50S ribosomal subunit IF-1, IF-2 and IF-3 are released leaving the mature 70S translation initiation complex. The protein is Translation initiation factor IF-1, chloroplastic of Hedera helix (English ivy).